The primary structure comprises 197 residues: Putative ankyrin repeat protein R875 (197 aa).

ANK repeat units lie at residues 78–106 (LNKC…DIRE), 107–136 (NDDC…DIRA), 138–166 (DDDA…NFRK), and 168–196 (NDYE…VLHE).

In Acanthamoeba polyphaga mimivirus (APMV), this protein is Putative ankyrin repeat protein R875.